The sequence spans 113 residues: U11-theraphotoxin-Hhn1a (113 aa).

The first 21 residues, 1–21 (MNTVRVTFLLVFVLAVSLGRA), serve as a signal peptide directing secretion. The propeptide occupies 22–74 (DKDENRMEMQEKTEQGKSYLDFAENLLLQKLEELEAKLLEEDSEESRNSRQKR). Disulfide bonds link cysteine 75–cysteine 90, cysteine 82–cysteine 95, and cysteine 89–cysteine 110.

The protein belongs to the neurotoxin 14 (magi-1) family. 01 (HNTX-16) subfamily. As to expression, expressed by the venom gland.

It is found in the secreted. Its function is as follows. Probable ion channel inhibitor. The chain is U11-theraphotoxin-Hhn1a from Cyriopagopus hainanus (Chinese bird spider).